A 457-amino-acid polypeptide reads, in one-letter code: Paired box protein Pax-8 (457 aa).

Positions 9-135 form a DNA-binding region, paired; it reads GHGGLNQLGG…SSINRIIRTK (127 aa). Residues 12–68 form a PAI subdomain region; that stretch reads GLNQLGGAFVNGRPLPEVVRQRIVDLAHQGVRPCDISRQLRVSHGCVSKILGRYYET. An RED subdomain region spans residues 87–135; that stretch reads KVVEKIGDYKRQNPTMFAWEIRDRLLAEGVCDNDTVPSVSSINRIIRTK. A compositionally biased stretch (polar residues) spans 159–182; that stretch reads LIPSSAVTPPESPQSDSLGSTYSI. Positions 159–226 are disordered; sequence LIPSSAVTPP…SSGPRKHLRT (68 aa). Residue Ser-304 is modified to Phosphoserine.

In terms of assembly, interacts with WWTR1.

The protein localises to the nucleus. Its function is as follows. Thought to encode a transcription factor. It may have a role in kidney cell differentiation. May play a regulatory role in mammalian development. The chain is Paired box protein Pax-8 (Pax8) from Rattus norvegicus (Rat).